The primary structure comprises 241 residues: Proteasome subunit alpha (241 aa).

This sequence belongs to the peptidase T1A family. In terms of assembly, the 20S proteasome core is composed of 14 alpha and 14 beta subunits that assemble into four stacked heptameric rings, resulting in a barrel-shaped structure. The two inner rings, each composed of seven catalytic beta subunits, are sandwiched by two outer rings, each composed of seven alpha subunits. The catalytic chamber with the active sites is on the inside of the barrel. Has a gated structure, the ends of the cylinder being occluded by the N-termini of the alpha-subunits. Is capped at one or both ends by the proteasome regulatory ATPase, PAN.

Its subcellular location is the cytoplasm. The formation of the proteasomal ATPase PAN-20S proteasome complex, via the docking of the C-termini of PAN into the intersubunit pockets in the alpha-rings, triggers opening of the gate for substrate entry. Interconversion between the open-gate and close-gate conformations leads to a dynamic regulation of the 20S proteasome proteolysis activity. In terms of biological role, component of the proteasome core, a large protease complex with broad specificity involved in protein degradation. This Saccharolobus solfataricus (strain ATCC 35092 / DSM 1617 / JCM 11322 / P2) (Sulfolobus solfataricus) protein is Proteasome subunit alpha.